The sequence spans 197 residues: Phosphoheptose isomerase (197 aa).

One can recognise an SIS domain in the interval 36–197; the sequence is LFAALANNGR…IDALLLGDTE (162 aa). 51 to 53 contributes to the substrate binding site; the sequence is NGG. Zn(2+) is bound by residues H60 and E64. Substrate contacts are provided by residues E64, 93-94, 119-121, S124, and Q174; these read ND and STS. Zn(2+) is bound by residues Q174 and H182.

The protein belongs to the SIS family. GmhA subfamily. As to quaternary structure, homotetramer. Zn(2+) is required as a cofactor.

The protein resides in the cytoplasm. The enzyme catalyses 2 D-sedoheptulose 7-phosphate = D-glycero-alpha-D-manno-heptose 7-phosphate + D-glycero-beta-D-manno-heptose 7-phosphate. Its pathway is carbohydrate biosynthesis; D-glycero-D-manno-heptose 7-phosphate biosynthesis; D-glycero-alpha-D-manno-heptose 7-phosphate and D-glycero-beta-D-manno-heptose 7-phosphate from sedoheptulose 7-phosphate: step 1/1. Functionally, catalyzes the isomerization of sedoheptulose 7-phosphate in D-glycero-D-manno-heptose 7-phosphate. The sequence is that of Phosphoheptose isomerase from Bordetella avium (strain 197N).